A 186-amino-acid polypeptide reads, in one-letter code: NADH-quinone oxidoreductase subunit B 2 (186 aa).

The interval 1–27 is disordered; sequence MPSFTQPHSAPRNFQFPGQQRQGDPTM. 4 residues coordinate [4Fe-4S] cluster: cysteine 65, cysteine 66, cysteine 130, and cysteine 160.

It belongs to the complex I 20 kDa subunit family. NDH-1 is composed of 14 different subunits. Subunits NuoB, C, D, E, F, and G constitute the peripheral sector of the complex. The cofactor is [4Fe-4S] cluster.

The protein resides in the cell inner membrane. It carries out the reaction a quinone + NADH + 5 H(+)(in) = a quinol + NAD(+) + 4 H(+)(out). Its function is as follows. NDH-1 shuttles electrons from NADH, via FMN and iron-sulfur (Fe-S) centers, to quinones in the respiratory chain. The immediate electron acceptor for the enzyme in this species is believed to be ubiquinone. Couples the redox reaction to proton translocation (for every two electrons transferred, four hydrogen ions are translocated across the cytoplasmic membrane), and thus conserves the redox energy in a proton gradient. This Rhizobium etli (strain ATCC 51251 / DSM 11541 / JCM 21823 / NBRC 15573 / CFN 42) protein is NADH-quinone oxidoreductase subunit B 2.